Here is a 353-residue protein sequence, read N- to C-terminus: MLYSLLYGYFNINLFQYLTFRAGLGFFIAFFLTLFLMPKFILWAKAKKANQPISSFVPSHQNKKDTPTMGGIVFVFATIVASVLCASLSNLYVLLGIIVLVGFSFVGFRDDYTKINQQNNAGMSAKMKFGMLFILSLIVSVLLSLKGLDTFLYAPFLKNPLFEMPTMLAVGFWVLVFLSTSNAVNLTDGLDGLASVPSIFTLLSLSIFVYVAGNAEFSKYLLYPKVIDVGELFVISLALVGSLFGFLWYNCNPASVFMGDSGSLAIGGFIAYNAIVSHNEILLVLMGSIFVIETLSVILQVGSYKTRKKRLFLMAPIHHHFEQKGWAENKVIVRFWIISMLSNLVALLSLKVC.

Transmembrane regions (helical) follow at residues 24–44, 66–86, 88–108, 129–149, 160–180, 192–212, 229–249, 256–276, 281–301, and 330–350; these read LGFFIAFFLTLFLMPKFILWA, TPTMGGIVFVFATIVASVLCA, LSNLYVLLGIIVLVGFSFVGF, FGMLFILSLIVSVLLSLKGLD, PLFEMPTMLAVGFWVLVFLST, GLASVPSIFTLLSLSIFVYVA, VGELFVISLALVGSLFGFLWY, VFMGDSGSLAIGGFIAYNAIV, ILLVLMGSIFVIETLSVILQV, and KVIVRFWIISMLSNLVALLSL.

It belongs to the glycosyltransferase 4 family. MraY subfamily. The cofactor is Mg(2+).

The protein localises to the cell inner membrane. The enzyme catalyses UDP-N-acetyl-alpha-D-muramoyl-L-alanyl-gamma-D-glutamyl-meso-2,6-diaminopimeloyl-D-alanyl-D-alanine + di-trans,octa-cis-undecaprenyl phosphate = di-trans,octa-cis-undecaprenyl diphospho-N-acetyl-alpha-D-muramoyl-L-alanyl-D-glutamyl-meso-2,6-diaminopimeloyl-D-alanyl-D-alanine + UMP. It participates in cell wall biogenesis; peptidoglycan biosynthesis. Functionally, catalyzes the initial step of the lipid cycle reactions in the biosynthesis of the cell wall peptidoglycan: transfers peptidoglycan precursor phospho-MurNAc-pentapeptide from UDP-MurNAc-pentapeptide onto the lipid carrier undecaprenyl phosphate, yielding undecaprenyl-pyrophosphoryl-MurNAc-pentapeptide, known as lipid I. The polypeptide is Phospho-N-acetylmuramoyl-pentapeptide-transferase (Helicobacter pylori (strain J99 / ATCC 700824) (Campylobacter pylori J99)).